Here is a 331-residue protein sequence, read N- to C-terminus: Biotin synthase (331 aa).

One can recognise a Radical SAM core domain in the interval 52 to 277 (PEVEVEGIVS…RTILRYAGGR (226 aa)). Positions 67, 71, and 74 each coordinate [4Fe-4S] cluster. Residues cysteine 110, cysteine 202, and arginine 272 each coordinate [2Fe-2S] cluster.

It belongs to the radical SAM superfamily. Biotin synthase family. Homodimer. [4Fe-4S] cluster is required as a cofactor. It depends on [2Fe-2S] cluster as a cofactor.

It catalyses the reaction (4R,5S)-dethiobiotin + (sulfur carrier)-SH + 2 reduced [2Fe-2S]-[ferredoxin] + 2 S-adenosyl-L-methionine = (sulfur carrier)-H + biotin + 2 5'-deoxyadenosine + 2 L-methionine + 2 oxidized [2Fe-2S]-[ferredoxin]. The protein operates within cofactor biosynthesis; biotin biosynthesis; biotin from 7,8-diaminononanoate: step 2/2. Its function is as follows. Catalyzes the conversion of dethiobiotin (DTB) to biotin by the insertion of a sulfur atom into dethiobiotin via a radical-based mechanism. The protein is Biotin synthase of Salinispora tropica (strain ATCC BAA-916 / DSM 44818 / JCM 13857 / NBRC 105044 / CNB-440).